Reading from the N-terminus, the 64-residue chain is Cytochrome c oxidase subunit 2 (64 aa).

Topologically, residues 1-14 (MAHPSQLGFQDAAS) are mitochondrial intermembrane. The chain crosses the membrane as a helical span at residues 15-45 (PVMEELXHFHDHTLMIVFLISTLVXYIIVAM). Residues 46–64 (VSTKLTNKYVLDSQEIEIV) lie on the Mitochondrial matrix side of the membrane.

The protein belongs to the cytochrome c oxidase subunit 2 family. Component of the cytochrome c oxidase (complex IV, CIV), a multisubunit enzyme composed of 14 subunits. The complex is composed of a catalytic core of 3 subunits MT-CO1, MT-CO2 and MT-CO3, encoded in the mitochondrial DNA, and 11 supernumerary subunits COX4I, COX5A, COX5B, COX6A, COX6B, COX6C, COX7A, COX7B, COX7C, COX8 and NDUFA4, which are encoded in the nuclear genome. The complex exists as a monomer or a dimer and forms supercomplexes (SCs) in the inner mitochondrial membrane with NADH-ubiquinone oxidoreductase (complex I, CI) and ubiquinol-cytochrome c oxidoreductase (cytochrome b-c1 complex, complex III, CIII), resulting in different assemblies (supercomplex SCI(1)III(2)IV(1) and megacomplex MCI(2)III(2)IV(2)). Found in a complex with TMEM177, COA6, COX18, COX20, SCO1 and SCO2. Interacts with TMEM177 in a COX20-dependent manner. Interacts with COX20. Interacts with COX16. Requires Cu cation as cofactor.

The protein resides in the mitochondrion inner membrane. It catalyses the reaction 4 Fe(II)-[cytochrome c] + O2 + 8 H(+)(in) = 4 Fe(III)-[cytochrome c] + 2 H2O + 4 H(+)(out). Component of the cytochrome c oxidase, the last enzyme in the mitochondrial electron transport chain which drives oxidative phosphorylation. The respiratory chain contains 3 multisubunit complexes succinate dehydrogenase (complex II, CII), ubiquinol-cytochrome c oxidoreductase (cytochrome b-c1 complex, complex III, CIII) and cytochrome c oxidase (complex IV, CIV), that cooperate to transfer electrons derived from NADH and succinate to molecular oxygen, creating an electrochemical gradient over the inner membrane that drives transmembrane transport and the ATP synthase. Cytochrome c oxidase is the component of the respiratory chain that catalyzes the reduction of oxygen to water. Electrons originating from reduced cytochrome c in the intermembrane space (IMS) are transferred via the dinuclear copper A center (CU(A)) of subunit 2 and heme A of subunit 1 to the active site in subunit 1, a binuclear center (BNC) formed by heme A3 and copper B (CU(B)). The BNC reduces molecular oxygen to 2 water molecules using 4 electrons from cytochrome c in the IMS and 4 protons from the mitochondrial matrix. In Scaphirhynchus platorynchus (Shovelnose sturgeon), this protein is Cytochrome c oxidase subunit 2 (mt-co2).